The sequence spans 265 residues: Neutrophil elastase (265 aa).

A signal peptide spans 1–26 (MALGRLSSRTLAAMLLALFLGGPALA). The region spanning 29–247 (IVGGRPARPH…FADWINSIIR (219 aa)) is the Peptidase S1 domain. An intrachain disulfide couples Cys54 to Cys70. Active-site charge relay system residues include His69 and Asp116. N-linked (GlcNAc...) asparagine glycans are attached at residues Asn123 and Asn172. Cystine bridges form between Cys150–Cys208, Cys180–Cys187, and Cys198–Cys223. The Charge relay system role is filled by Ser202.

The protein belongs to the peptidase S1 family. Elastase subfamily. As to quaternary structure, interacts with NOTCH2NL.

It carries out the reaction Hydrolysis of proteins, including elastin. Preferential cleavage: Val-|-Xaa &gt; Ala-|-Xaa.. Serine protease that modifies the functions of natural killer cells, monocytes and granulocytes. Inhibits C5a-dependent neutrophil enzyme release and chemotaxis. Promotes blood coagulation. Through the activation of the platelet fibrinogen receptor integrin alpha-IIb/beta-3, potentiates platelet aggregation induced by a threshold concentration of cathepsin G (CTSG). Cleaves and thus inactivates tissue factor pathway inhibitor (TFPI). Capable of killing E.coli; probably digests outer membrane protein A (ompA) in E.coli. In Mus musculus (Mouse), this protein is Neutrophil elastase (Elane).